Reading from the N-terminus, the 252-residue chain is Sulfoacetaldehyde reductase 2 (252 aa).

6 to 30 contributes to the NADP(+) binding site; sequence LITGATSGFGRAAARRFADAGWSLI. Ser-139 lines the substrate pocket. The active-site Proton acceptor is the Tyr-152.

The protein belongs to the short-chain dehydrogenases/reductases (SDR) family. As to quaternary structure, homodimer and heterotetramer.

It carries out the reaction 2-hydroxyethane-1-sulfonate + NADP(+) = sulfoacetaldehyde + NADPH + H(+). It participates in organosulfur degradation. Functionally, catalyzes the formation of isethionate from 2-sulfoacetaldehyde in the deaminative pathway of taurine. Constitutively expressed enzyme that only mediates a small part of the activity observed in taurine-grown cells. The sequence is that of Sulfoacetaldehyde reductase 2 (isfD2) from Chromohalobacter salexigens (strain ATCC BAA-138 / DSM 3043 / CIP 106854 / NCIMB 13768 / 1H11).